The following is a 552-amino-acid chain: Non-structural protein NS1 (552 aa).

Belongs to the orbivirus non-structural protein NS1 family.

The protein is Non-structural protein NS1 (Segment-5) of Bluetongue virus 13 (isolate USA) (BTV 13).